Consider the following 473-residue polypeptide: Sulfate adenylyltransferase subunit 1 (473 aa).

The region spanning 19–238 (KTLLKFLTCG…IKIKNSISSE (220 aa)) is the tr-type G domain. The segment at 28–35 (GSVDDGKS) is G1. Residue 28 to 35 (GSVDDGKS) participates in GTP binding. Residues 86 to 90 (GITID) form a G2 region. The G3 stretch occupies residues 107-110 (DTPG). GTP is bound by residues 107-111 (DTPGH) and 162-165 (NKMD). The segment at 162-165 (NKMD) is G4. A G5 region spans residues 200–202 (SAL).

This sequence belongs to the TRAFAC class translation factor GTPase superfamily. Classic translation factor GTPase family. CysN/NodQ subfamily. Heterodimer composed of CysD, the smaller subunit, and CysN.

It catalyses the reaction sulfate + ATP + H(+) = adenosine 5'-phosphosulfate + diphosphate. The protein operates within sulfur metabolism; hydrogen sulfide biosynthesis; sulfite from sulfate: step 1/3. With CysD forms the ATP sulfurylase (ATPS) that catalyzes the adenylation of sulfate producing adenosine 5'-phosphosulfate (APS) and diphosphate, the first enzymatic step in sulfur assimilation pathway. APS synthesis involves the formation of a high-energy phosphoric-sulfuric acid anhydride bond driven by GTP hydrolysis by CysN coupled to ATP hydrolysis by CysD. The sequence is that of Sulfate adenylyltransferase subunit 1 from Buchnera aphidicola subsp. Acyrthosiphon pisum (strain APS) (Acyrthosiphon pisum symbiotic bacterium).